The primary structure comprises 507 residues: Archaeal-type glutamate synthase [NADPH] (507 aa).

4Fe-4S ferredoxin-type domains are found at residues 10 to 39 (FVVE…YDEN) and 41 to 70 (NRVY…VRRN). Residues Cys-19, Cys-22, Cys-25, Cys-29, Cys-50, Cys-53, Cys-56, and Cys-60 each contribute to the [4Fe-4S] cluster site.

This sequence belongs to the glutamate synthase family. FMN serves as cofactor.

The catalysed reaction is 2 L-glutamate + NADP(+) = L-glutamine + 2-oxoglutarate + NADPH + H(+). The sequence is that of Archaeal-type glutamate synthase [NADPH] from Thermotoga neapolitana (strain ATCC 49049 / DSM 4359 / NBRC 107923 / NS-E).